The sequence spans 1117 residues: PR domain zinc finger protein 10 (1117 aa).

Positions 97–142 (QQTPLGGLEAKEEEDEDEDEDTEEDEEEDGEDADLDDWEPDPPRPF) are disordered. The span at 107–136 (KEEEDEDEDEDTEEDEEEDGEDADLDDWEP) shows a compositional bias: acidic residues. The 119-residue stretch at 182–300 (LPLVLYIDRF…PKQELKVWYA (119 aa)) folds into the SET domain. The segment at 201–305 (IPKRTQLGPV…KVWYAASYAE (105 aa)) is N-terminal PR domain; essential for transcriptional activator activity. A C2H2-type 1 zinc finger spans residues 329–351 (WPCYECNRRFISSEQLQQHLNSH). Residue lysine 354 forms a Glycyl lysine isopeptide (Lys-Gly) (interchain with G-Cter in SUMO2) linkage. Over residues 361 to 381 (TRGRGRGRGKRRFGPGRRPGR) the composition is skewed to basic residues. The segment at 361–386 (TRGRGRGRGKRRFGPGRRPGRPPKFI) is disordered. Residue serine 398 is modified to Phosphoserine. Threonine 402 bears the Phosphothreonine mark. The disordered stretch occupies residues 440–474 (QETQSSLEHEPETHTLHLQPQHEESVVPTQSTLTA). Basic and acidic residues predominate over residues 446-464 (LEHEPETHTLHLQPQHEES). C2H2-type zinc fingers lie at residues 500–522 (FKCLQCGKAFREKDKLDQHLRFH), 530–552 (LTCDLCNKGFISSASLESHMKLH), 558–580 (YSCIFCPESFDRLDLLKDHVAIH), 586–609 (FTCPTCKKRFPDFIQVKKHVRSFH), 614–636 (YQCTECDKAFCRPDKLRLHMLRH), 642–665 (FLCSTCGKQFKRKDKLREHMQRMH), 697–720 (FKCRLCMMGFRRRGMLVNHLSKRH), 742–765 (YFCQYCDKVYKSASKRKAHILKNH), and 804–827 (VCCPHCSKQYSSKTKMVQHIRKKH). Residues 871–1097 (QAMTELSQTL…QTTSQQQTTQ (227 aa)) form a C-terminal glutamine-rich region; essential for transcriptional activator activity region. 3 disordered regions span residues 919–943 (VAPATSPHQSQQSTVDVGQLHDPQP), 958–1001 (GQPL…SSVQ), and 1066–1094 (QTSALSGGVQVQPPAHSDSLDPQTTSQQQ). Over residues 924–934 (SPHQSQQSTVD) the composition is skewed to polar residues.

This sequence belongs to the class V-like SAM-binding methyltransferase superfamily.

The protein localises to the nucleus. Its function is as follows. Transcriptional activator, essential for early embryonic development and survival of embryonic stem cells (ESCs). Supports cell growth and survival during early development by transcriptionally activating the expression of the translation initiation factor EIF3B, to sustain global translation. Activates the transcription of FLNC. This chain is PR domain zinc finger protein 10 (PRDM10), found in Pongo abelii (Sumatran orangutan).